A 371-amino-acid polypeptide reads, in one-letter code: Bifunctional enzyme IspD/IspF (371 aa).

The 2-C-methyl-D-erythritol 4-phosphate cytidylyltransferase stretch occupies residues 1 to 212 (MKDITLVLLA…FDFTPASGTI (212 aa)). The interval 213–371 (FTGNGFDVHA…NLGYFDWRKF (159 aa)) is 2-C-methyl-D-erythritol 2,4-cyclodiphosphate synthase. A divalent metal cation contacts are provided by Asp-219 and His-221. Residues 219 to 221 (DVH) and 245 to 246 (HS) each bind 4-CDP-2-C-methyl-D-erythritol 2-phosphate. Position 253 (His-253) interacts with a divalent metal cation. Residues 267–269 (DIG), 272–276 (FPDTD), 341–344 (STTE), Phe-348, and Arg-351 contribute to the 4-CDP-2-C-methyl-D-erythritol 2-phosphate site.

The protein in the N-terminal section; belongs to the IspD/TarI cytidylyltransferase family. IspD subfamily. This sequence in the C-terminal section; belongs to the IspF family. A divalent metal cation is required as a cofactor.

The catalysed reaction is 2-C-methyl-D-erythritol 4-phosphate + CTP + H(+) = 4-CDP-2-C-methyl-D-erythritol + diphosphate. The enzyme catalyses 4-CDP-2-C-methyl-D-erythritol 2-phosphate = 2-C-methyl-D-erythritol 2,4-cyclic diphosphate + CMP. Its pathway is isoprenoid biosynthesis; isopentenyl diphosphate biosynthesis via DXP pathway; isopentenyl diphosphate from 1-deoxy-D-xylulose 5-phosphate: step 2/6. It functions in the pathway isoprenoid biosynthesis; isopentenyl diphosphate biosynthesis via DXP pathway; isopentenyl diphosphate from 1-deoxy-D-xylulose 5-phosphate: step 4/6. Bifunctional enzyme that catalyzes the formation of 4-diphosphocytidyl-2-C-methyl-D-erythritol from CTP and 2-C-methyl-D-erythritol 4-phosphate (MEP) (IspD), and catalyzes the conversion of 4-diphosphocytidyl-2-C-methyl-D-erythritol 2-phosphate (CDP-ME2P) to 2-C-methyl-D-erythritol 2,4-cyclodiphosphate (ME-CPP) with a corresponding release of cytidine 5-monophosphate (CMP) (IspF). This Campylobacter hominis (strain ATCC BAA-381 / DSM 21671 / CCUG 45161 / LMG 19568 / NCTC 13146 / CH001A) protein is Bifunctional enzyme IspD/IspF.